The sequence spans 67 residues: Conotoxin VnMMSK-02 (67 aa).

The N-terminal stretch at 1 to 20 (MMSKLGALLTICLLLFPLTA) is a signal peptide. A propeptide spanning residues 21–52 (LPLDGDQPADRPAERMQDDISSEQHPLFDKER) is cleaved from the precursor. Position 53 is a pyrrolidone carboxylic acid (Q53). Cystine bridges form between C54–C66, C55–C62, and C59–C65. P64 is subject to 4-hydroxyproline. C66 is modified (cysteine amide).

It belongs to the conotoxin M superfamily. Expressed by the venom duct.

The protein localises to the secreted. The protein is Conotoxin VnMMSK-02 of Conus ventricosus (Mediterranean cone).